The following is a 101-amino-acid chain: MVTNITLILTLMTLASVTAQTFQYSRGWTNGKRDGHKRDELRDEVLERILTPCQLDKLKYVLEGKPLNDRLFVPCDYIEEEVNQPKRYKGERNHELFDVFQ.

A signal peptide spans 1–19 (MVTNITLILTLMTLASVTA). At Gln20 the chain carries Pyrrolidone carboxylic acid. An Asparagine amide modification is found at Asn30.

Belongs to the corazonin family.

It localises to the secreted. In terms of biological role, cardioactive peptide. Corazonin is probably involved in the physiological regulation of the heart beat. This chain is Pro-corazonin (crz), found in Bombyx mori (Silk moth).